Here is a 361-residue protein sequence, read N- to C-terminus: Innexin inx1 (361 aa).

The Cytoplasmic segment spans residues 1 to 28; sequence MYKLLGGLKEYLKWQDIVTDNAIFRLHN. A helical transmembrane segment spans residues 29–49; the sequence is LFTTVLLLTCSLIITATQYVG. At 50-109 the chain is on the extracellular side; sequence NPIHCIVNGLPVRPINTYCWITSTFTMPDAFLRQVGSEVAHPGVANDFGDEDAKKYYTYY. A helical transmembrane segment spans residues 110 to 130; the sequence is QWVCFVLFFQAMLCYTPKWIW. Over 131 to 181 the chain is Cytoplasmic; the sequence is DSIEGGLLRTLIMGLNRGLCQDDEKCMKKKALIEYLLRHIKRHNMYALKYW. The helical transmembrane segment at 182–202 threads the bilayer; that stretch reads FCETLCLVNIIGQLYLMNHFF. Residues 203 to 267 lie on the Extracellular side of the membrane; the sequence is DGEFFSYGLR…LPLNIVNEKT (65 aa). Residues 268–288 form a helical membrane-spanning segment; the sequence is YIFLWFWYIILAALLSVLVVY. The Cytoplasmic segment spans residues 289–361; that stretch reads RAVILAVPSV…KIETPSSNNP (73 aa).

This sequence belongs to the pannexin family. Expressed in embryonic neural precursors including the dorsal median neuroblast, glial cells, neuropilar glial ring, developing myoblasts cells and in a circumferential band of epithelial cells at the trochanter/coxa boundary stripe in the developing limb.

It localises to the cell membrane. Its subcellular location is the cell junction. The protein resides in the gap junction. In terms of biological role, structural components of the gap junctions. This is Innexin inx1 (inx1) from Schistocerca americana (American grasshopper).